The primary structure comprises 229 residues: Ribonuclease 3 (229 aa).

Positions Phe2–Gly130 constitute an RNase III domain. Glu43 contributes to the Mg(2+) binding site. Asp47 is an active-site residue. Positions 116 and 119 each coordinate Mg(2+). Glu119 is an active-site residue. A DRBM domain is found at Asp157 to Gly226.

Belongs to the ribonuclease III family. As to quaternary structure, homodimer. The cofactor is Mg(2+).

The protein localises to the cytoplasm. The enzyme catalyses Endonucleolytic cleavage to 5'-phosphomonoester.. Digests double-stranded RNA. Involved in the processing of primary rRNA transcript to yield the immediate precursors to the large and small rRNAs (23S and 16S). Processes some mRNAs, and tRNAs when they are encoded in the rRNA operon. Processes pre-crRNA and tracrRNA of type II CRISPR loci if present in the organism. The protein is Ribonuclease 3 of Oleidesulfovibrio alaskensis (strain ATCC BAA-1058 / DSM 17464 / G20) (Desulfovibrio alaskensis).